A 404-amino-acid polypeptide reads, in one-letter code: F-box only protein 12 (404 aa).

The F-box domain maps to 1–44; that stretch reads MKNSIPIDLIYEILSRLPAKSVARCRCVSKRWRSILRHQVFTEL. Residues 383–403 traverse the membrane as a helical segment; the sequence is LAILFCLFFLLFNYLIRLCWV.

It localises to the membrane. The chain is F-box only protein 12 (FBX12) from Arabidopsis thaliana (Mouse-ear cress).